A 331-amino-acid chain; its full sequence is UAP56-interacting factor (331 aa).

The UAP56-binding motif motif lies at 16 to 34 (APDKVDMSLDDIIRLNKKE). 3 disordered regions span residues 30-51 (LNKK…LQKG), 63-99 (RARG…RRRG), and 158-193 (GQRR…TQRE). Polar residues predominate over residues 166–175 (TDIQRGLNST).

This sequence belongs to the UIF family.

The protein resides in the nucleus. Its subcellular location is the nucleoplasm. The protein localises to the nucleus speckle. Functionally, required for mRNA export from the nucleus to the cytoplasm. Acts as an adapter that uses the ddx39b/uap56-nfx1 pathway to ensure efficient mRNA export and delivering to the nuclear pore. This chain is UAP56-interacting factor (fyttd1), found in Salmo salar (Atlantic salmon).